Consider the following 290-residue polypeptide: Nucleotide-binding protein Clos_0574 (290 aa).

Position 8-15 (glycine 8–serine 15) interacts with ATP. Aspartate 59 to glycine 62 lines the GTP pocket.

It belongs to the RapZ-like family.

In terms of biological role, displays ATPase and GTPase activities. This Alkaliphilus oremlandii (strain OhILAs) (Clostridium oremlandii (strain OhILAs)) protein is Nucleotide-binding protein Clos_0574.